The primary structure comprises 358 residues: Uroporphyrinogen decarboxylase (358 aa).

Substrate contacts are provided by residues 29–33 (RQAGR), Asp79, Tyr156, Thr211, and His329.

Belongs to the uroporphyrinogen decarboxylase family. In terms of assembly, homodimer.

The protein resides in the cytoplasm. The catalysed reaction is uroporphyrinogen III + 4 H(+) = coproporphyrinogen III + 4 CO2. Its pathway is porphyrin-containing compound metabolism; protoporphyrin-IX biosynthesis; coproporphyrinogen-III from 5-aminolevulinate: step 4/4. In terms of biological role, catalyzes the decarboxylation of four acetate groups of uroporphyrinogen-III to yield coproporphyrinogen-III. This is Uroporphyrinogen decarboxylase from Idiomarina loihiensis (strain ATCC BAA-735 / DSM 15497 / L2-TR).